The primary structure comprises 412 residues: Serine hydroxymethyltransferase (412 aa).

(6S)-5,6,7,8-tetrahydrofolate contacts are provided by residues leucine 112 and 116–118 (GHL). The residue at position 221 (lysine 221) is an N6-(pyridoxal phosphate)lysine. Glutamate 237 contributes to the (6S)-5,6,7,8-tetrahydrofolate binding site.

Belongs to the SHMT family. As to quaternary structure, homodimer. It depends on pyridoxal 5'-phosphate as a cofactor.

It localises to the cytoplasm. The enzyme catalyses (6R)-5,10-methylene-5,6,7,8-tetrahydrofolate + glycine + H2O = (6S)-5,6,7,8-tetrahydrofolate + L-serine. It participates in one-carbon metabolism; tetrahydrofolate interconversion. The protein operates within amino-acid biosynthesis; glycine biosynthesis; glycine from L-serine: step 1/1. Functionally, catalyzes the reversible interconversion of serine and glycine with tetrahydrofolate (THF) serving as the one-carbon carrier. This reaction serves as the major source of one-carbon groups required for the biosynthesis of purines, thymidylate, methionine, and other important biomolecules. Also exhibits THF-independent aldolase activity toward beta-hydroxyamino acids, producing glycine and aldehydes, via a retro-aldol mechanism. The protein is Serine hydroxymethyltransferase of Malacoplasma penetrans (strain HF-2) (Mycoplasma penetrans).